Consider the following 451-residue polypeptide: Mannan endo-1,6-alpha-mannosidase DCW1 (451 aa).

Positions 1–21 (MLAVTFTAAAVLSLLAASGRT) are cleaved as a signal peptide. 6 N-linked (GlcNAc...) asparagine glycosylation sites follow: Asn-84, Asn-109, Asn-203, Asn-242, Asn-267, and Asn-291. Residues 397–419 (AMNGGTSPGDPAAGTKTKAENLP) form a disordered region. Asp-427 is lipidated: GPI-anchor amidated aspartate. A propeptide spans 428 to 451 (RAGAGIITALIGSSFLACTLWLII) (removed in mature form).

Belongs to the glycosyl hydrolase 76 family.

The protein resides in the secreted. It is found in the cell wall. It localises to the cell membrane. The enzyme catalyses Random hydrolysis of (1-&gt;6)-alpha-D-mannosidic linkages in unbranched (1-&gt;6)-mannans.. In terms of biological role, required for normal synthesis of the cell wall. The polypeptide is Mannan endo-1,6-alpha-mannosidase DCW1 (DCW1) (Eremothecium gossypii (strain ATCC 10895 / CBS 109.51 / FGSC 9923 / NRRL Y-1056) (Yeast)).